The primary structure comprises 141 residues: Large ribosomal subunit protein bL17 (141 aa).

This sequence belongs to the bacterial ribosomal protein bL17 family. As to quaternary structure, part of the 50S ribosomal subunit. Contacts protein L32.

This chain is Large ribosomal subunit protein bL17, found in Sinorhizobium fredii (strain NBRC 101917 / NGR234).